The sequence spans 319 residues: Transmembrane and ubiquitin-like domain-containing protein 2 (319 aa).

A helical transmembrane segment spans residues 36–56 (VMVVAGVVVLTLALVLAWLST). 2 disordered regions span residues 88–130 (VNQG…GDME) and 146–165 (QAGL…DSTC). A compositionally biased stretch (basic and acidic residues) spans 95-111 (PTEHPHPSGGSDDKAEE). Positions 173–246 (INVRLKFLND…IHCHRSPPGA (74 aa)) constitute a Ubiquitin-like domain. Transmembrane regions (helical) follow at residues 264-284 (LGVN…GVVW) and 293-313 (FFTA…SFLV).

The protein localises to the membrane. This Rattus norvegicus (Rat) protein is Transmembrane and ubiquitin-like domain-containing protein 2 (Tmub2).